Consider the following 147-residue polypeptide: MTIFCELESGVDLPEYATEGASGADLRANIEEPIAVLPGQRVLVPTGIKMQIPQGYEVQVRPRSGLALKHGIMVVNSPGTIDADYRGEVCIILANFGESTFIIEPKMRVAQAVVAPVVQAKFIVVDQEEGLTTTSRGSRGFGHTGEK.

Residues 63 to 65 (RSG), Asn-76, and 80 to 82 (TID) contribute to the substrate site.

The protein belongs to the dUTPase family. The cofactor is Mg(2+).

The enzyme catalyses dUTP + H2O = dUMP + diphosphate + H(+). It participates in pyrimidine metabolism; dUMP biosynthesis; dUMP from dCTP (dUTP route): step 2/2. Functionally, this enzyme is involved in nucleotide metabolism: it produces dUMP, the immediate precursor of thymidine nucleotides and it decreases the intracellular concentration of dUTP so that uracil cannot be incorporated into DNA. In Chlamydia felis (strain Fe/C-56) (Chlamydophila felis), this protein is Deoxyuridine 5'-triphosphate nucleotidohydrolase.